A 117-amino-acid polypeptide reads, in one-letter code: Immunoglobulin heavy variable 1-46 (117 aa).

An N-terminal signal peptide occupies residues 1 to 19 (MDWTWRVFCLLAVAPGAHS). The segment at 20–44 (QVQLVQSGAEVKKPGASVKVSCKAS) is framework-1. In terms of domain architecture, Ig-like spans 20–117 (QVQLVQSGAE…EDTAVYYCAR (98 aa)). A disulfide bond links cysteine 41 and cysteine 115. The interval 45 to 52 (GYTFTSYY) is complementarity-determining-1. The tract at residues 53 to 69 (MHWVRQAPGQGLEWMGI) is framework-2. Residues 70-77 (INPSGGST) are complementarity-determining-2. The tract at residues 78 to 115 (SYAQKFQGRVTMTRDTSTSTVYMELSSLRSEDTAVYYC) is framework-3. A complementarity-determining-3 region spans residues 116-117 (AR).

In terms of assembly, immunoglobulins are composed of two identical heavy chains and two identical light chains; disulfide-linked.

It localises to the secreted. The protein resides in the cell membrane. Its function is as follows. V region of the variable domain of immunoglobulin heavy chains that participates in the antigen recognition. Immunoglobulins, also known as antibodies, are membrane-bound or secreted glycoproteins produced by B lymphocytes. In the recognition phase of humoral immunity, the membrane-bound immunoglobulins serve as receptors which, upon binding of a specific antigen, trigger the clonal expansion and differentiation of B lymphocytes into immunoglobulins-secreting plasma cells. Secreted immunoglobulins mediate the effector phase of humoral immunity, which results in the elimination of bound antigens. The antigen binding site is formed by the variable domain of one heavy chain, together with that of its associated light chain. Thus, each immunoglobulin has two antigen binding sites with remarkable affinity for a particular antigen. The variable domains are assembled by a process called V-(D)-J rearrangement and can then be subjected to somatic hypermutations which, after exposure to antigen and selection, allow affinity maturation for a particular antigen. This chain is Immunoglobulin heavy variable 1-46, found in Homo sapiens (Human).